A 198-amino-acid polypeptide reads, in one-letter code: MTAQNENAQAQAEQVEVANEAQLEQTAEVQQEQPVEAELAAAYARINELETYIAEADNREKDIQLRAQAEIQNIRRRAEQDVEKAHKFALEKFSKELLTVVDNLERGLNALDTAVTDEKTQALVDGVEMTHKEFISTLAKFGVEAVGVVGEAFNPEVHEAISMQPAEGIEANHISVVLQKGYTLQGRVLRPAMVMVAG.

It belongs to the GrpE family. In terms of assembly, homodimer.

The protein localises to the cytoplasm. Its function is as follows. Participates actively in the response to hyperosmotic and heat shock by preventing the aggregation of stress-denatured proteins, in association with DnaK and GrpE. It is the nucleotide exchange factor for DnaK and may function as a thermosensor. Unfolded proteins bind initially to DnaJ; upon interaction with the DnaJ-bound protein, DnaK hydrolyzes its bound ATP, resulting in the formation of a stable complex. GrpE releases ADP from DnaK; ATP binding to DnaK triggers the release of the substrate protein, thus completing the reaction cycle. Several rounds of ATP-dependent interactions between DnaJ, DnaK and GrpE are required for fully efficient folding. This is Protein GrpE from Actinobacillus pleuropneumoniae serotype 3 (strain JL03).